Consider the following 130-residue polypeptide: Small ribosomal subunit protein uS11c (130 aa).

This sequence belongs to the universal ribosomal protein uS11 family. Part of the 30S ribosomal subunit.

The protein localises to the plastid. It localises to the chloroplast. The protein is Small ribosomal subunit protein uS11c of Bigelowiella natans (Pedinomonas minutissima).